The following is an 839-amino-acid chain: Putative AC9 transposase (839 aa).

The span at 32-43 (SSSNANGTATDP) shows a compositional bias: polar residues. The interval 32 to 85 (SSSNANGTATDPSQDDMAIVHEPQPQPQPQPEPQPQPQPEPEEEAPQKRAKKCT) is disordered. The segment covering 55–70 (QPQPQPQPEPQPQPQP) has biased composition (pro residues).

The chain is Putative AC9 transposase from Zea mays (Maize).